We begin with the raw amino-acid sequence, 383 residues long: Protein ctg-1 (383 aa).

The region spanning 73–247 (PPECLEKYCG…YWGGNLVENG (175 aa)) is the CRAL-TRIO domain. The 110-residue stretch at 271 to 380 (KKAMADYDQL…AKQLRYNIEI (110 aa)) folds into the GOLD domain.

In terms of tissue distribution, highly expressed in cells of the pi uterine cell lineage.

It localises to the cytoplasm. The protein localises to the cytosol. Vesicle trafficking protein. Functions in uterine cells to promote basement membrane (BM) mobility and BM gap formation during tissue remodeling. The chain is Protein ctg-1 from Caenorhabditis elegans.